The chain runs to 284 residues: MSPMESSSTRFPGQALPAAYLTPGSSSFTDFLRVAAPELMPGSRPVPDGAVEAPHGTTIVALTFRGGVLLAGDRRATMGNLIAQRDMEKLYVTDDYSAVGIAGTAGIALEMVRLYAIELEHYEKLEGVSLSLDGKANKLATMLRGNLQGAMAGLAVLPLFAGFDVDADDPDRAGRIVSYDITGGRYNELGGYYAVGSGSLFAKSALKKRFDPDADVDTAVRAAVEALYDAADDDTATGGPDLSRRIYPSIITITGTDGATRVPEERAAEIATEVVNGRMQNPGG.

The propeptide at 1 to 56 (MSPMESSSTRFPGQALPAAYLTPGSSSFTDFLRVAAPELMPGSRPVPDGAVEAPHG) is removed in mature form; by autocatalysis. Thr57 (nucleophile) is an active-site residue.

The protein belongs to the peptidase T1B family. As to quaternary structure, the 20S proteasome core is composed of 14 alpha and 14 beta subunits that assemble into four stacked heptameric rings, resulting in a barrel-shaped structure. The two inner rings, each composed of seven catalytic beta subunits, are sandwiched by two outer rings, each composed of seven alpha subunits. The catalytic chamber with the active sites is on the inside of the barrel. Has a gated structure, the ends of the cylinder being occluded by the N-termini of the alpha-subunits. Is capped by the proteasome-associated ATPase, ARC.

It is found in the cytoplasm. The catalysed reaction is Cleavage of peptide bonds with very broad specificity.. Its pathway is protein degradation; proteasomal Pup-dependent pathway. Its activity is regulated as follows. The formation of the proteasomal ATPase ARC-20S proteasome complex, likely via the docking of the C-termini of ARC into the intersubunit pockets in the alpha-rings, may trigger opening of the gate for substrate entry. Interconversion between the open-gate and close-gate conformations leads to a dynamic regulation of the 20S proteasome proteolysis activity. Its function is as follows. Component of the proteasome core, a large protease complex with broad specificity involved in protein degradation. The protein is Proteasome subunit beta of Saccharopolyspora erythraea (strain ATCC 11635 / DSM 40517 / JCM 4748 / NBRC 13426 / NCIMB 8594 / NRRL 2338).